Reading from the N-terminus, the 251-residue chain is Flap endonuclease Xni (251 aa).

Asp104 serves as a coordination point for Mg(2+). One can recognise a 5'-3' exonuclease domain in the interval 160–250; the sequence is VLPRQLPDYW…SGNLQQLRLK (91 aa). 5 residues coordinate K(+): Leu171, Ala172, Pro180, Val182, and Val185. Residues 184 to 189 form an interaction with DNA region; that stretch reads GVGAKT.

Belongs to the Xni family. The cofactor is Mg(2+). It depends on K(+) as a cofactor.

In terms of biological role, has flap endonuclease activity. During DNA replication, flap endonucleases cleave the 5'-overhanging flap structure that is generated by displacement synthesis when DNA polymerase encounters the 5'-end of a downstream Okazaki fragment. This is Flap endonuclease Xni from Yersinia pestis bv. Antiqua (strain Nepal516).